The sequence spans 175 residues: Crossover junction endodeoxyribonuclease RuvC (175 aa).

Catalysis depends on residues aspartate 8, glutamate 68, and aspartate 140. Mg(2+) contacts are provided by aspartate 8, glutamate 68, and aspartate 140.

Belongs to the RuvC family. As to quaternary structure, homodimer which binds Holliday junction (HJ) DNA. The HJ becomes 2-fold symmetrical on binding to RuvC with unstacked arms; it has a different conformation from HJ DNA in complex with RuvA. In the full resolvosome a probable DNA-RuvA(4)-RuvB(12)-RuvC(2) complex forms which resolves the HJ. The cofactor is Mg(2+).

Its subcellular location is the cytoplasm. It carries out the reaction Endonucleolytic cleavage at a junction such as a reciprocal single-stranded crossover between two homologous DNA duplexes (Holliday junction).. Functionally, the RuvA-RuvB-RuvC complex processes Holliday junction (HJ) DNA during genetic recombination and DNA repair. Endonuclease that resolves HJ intermediates. Cleaves cruciform DNA by making single-stranded nicks across the HJ at symmetrical positions within the homologous arms, yielding a 5'-phosphate and a 3'-hydroxyl group; requires a central core of homology in the junction. The consensus cleavage sequence is 5'-(A/T)TT(C/G)-3'. Cleavage occurs on the 3'-side of the TT dinucleotide at the point of strand exchange. HJ branch migration catalyzed by RuvA-RuvB allows RuvC to scan DNA until it finds its consensus sequence, where it cleaves and resolves the cruciform DNA. This Pseudomonas fluorescens (strain Pf0-1) protein is Crossover junction endodeoxyribonuclease RuvC.